We begin with the raw amino-acid sequence, 593 residues long: Metal-response element-binding transcription factor 2 (593 aa).

Residues Met-1–Asp-35 are disordered. Residues Val-12 to Gln-22 show a composition bias toward basic residues. Positions Lys-23–Ser-32 are enriched in polar residues. Thr-24 carries the post-translational modification Phosphothreonine. One can recognise a Tudor domain in the interval Cys-44–Gly-101. PHD-type zinc fingers lie at residues Glu-102–Ala-157 and Gln-201–Gly-255. Lys-360 participates in a covalent cross-link: Glycyl lysine isopeptide (Lys-Gly) (interchain with G-Cter in SUMO2). Over residues Lys-360 to Ile-374 the composition is skewed to basic and acidic residues. Disordered regions lie at residues Lys-360–Arg-411 and Lys-424–Gly-486. Over residues Thr-445 to Val-454 the composition is skewed to polar residues. A Phosphoserine modification is found at Ser-452. Residues Ala-459–Ser-471 show a composition bias toward low complexity. Lys-522 participates in a covalent cross-link: Glycyl lysine isopeptide (Lys-Gly) (interchain with G-Cter in SUMO2).

Belongs to the Polycomblike family. Associates with the PRC2 complex, which consists of the core components EED, EZH1 or EZH2, SUZ12, and RBBP4, and various combinations of accessory subunits including AEBP2, JARID2, PHF19, MTF2 and EPOP. Forms a dimeric PRC2.1 (class 1, PRC-PCL) complex consisting of at least SUZ12, RBBP4, and PHF19 or MTF2; PHF19 and MTF2 stabilize the dimeric structure which enhances PRC2 interaction with chromatin.

The protein resides in the nucleus. In terms of biological role, polycomb group (PcG) protein that specifically binds histone H3 trimethylated at 'Lys-36' (H3K36me3) and recruits the PRC2 complex, thus enhancing PRC2 H3K27me3 methylation activity. Regulates the transcriptional networks during embryonic stem cell self-renewal and differentiation. Promotes recruitment of the PRC2 complex to the inactive X chromosome in differentiating XX ES cells and PRC2 recruitment to target genes in undifferentiated ES cells. Required to repress Hox genes by enhancing H3K27me3 methylation of the PRC2 complex. In some conditions may act as an inhibitor of PRC2 activity: able to activate the CDKN2A gene and promote cellular senescence by suppressing the catalytic activity of the PRC2 complex locally. Binds to the metal-regulating-element (MRE) of MT1A gene promoter. This chain is Metal-response element-binding transcription factor 2 (MTF2), found in Homo sapiens (Human).